The primary structure comprises 404 residues: Histidinol dehydrogenase (404 aa).

NAD(+) is bound by residues tyrosine 114, glutamine 176, and asparagine 199. Residues serine 222, glutamine 244, and histidine 247 each contribute to the substrate site. Glutamine 244 and histidine 247 together coordinate Zn(2+). Active-site proton acceptor residues include glutamate 300 and histidine 301. Residues histidine 301, aspartate 334, glutamate 388, and histidine 393 each contribute to the substrate site. A Zn(2+)-binding site is contributed by aspartate 334. Histidine 393 serves as a coordination point for Zn(2+).

The protein belongs to the histidinol dehydrogenase family. Zn(2+) is required as a cofactor.

The enzyme catalyses L-histidinol + 2 NAD(+) + H2O = L-histidine + 2 NADH + 3 H(+). It functions in the pathway amino-acid biosynthesis; L-histidine biosynthesis; L-histidine from 5-phospho-alpha-D-ribose 1-diphosphate: step 9/9. Catalyzes the sequential NAD-dependent oxidations of L-histidinol to L-histidinaldehyde and then to L-histidine. The chain is Histidinol dehydrogenase (hisD) from Archaeoglobus fulgidus (strain ATCC 49558 / DSM 4304 / JCM 9628 / NBRC 100126 / VC-16).